The following is a 547-amino-acid chain: Chaperonin GroEL 2 (547 aa).

Residues 30 to 33 (TLGP), K51, 87 to 91 (DGTTT), G415, 479 to 481 (NAA), and D495 contribute to the ATP site. A disordered region spans residues 528–547 (KPATAGLPHGGPGGFGGPEF). The span at 535 to 547 (PHGGPGGFGGPEF) shows a compositional bias: gly residues.

It belongs to the chaperonin (HSP60) family. Forms a cylinder of 14 subunits composed of two heptameric rings stacked back-to-back. Interacts with the co-chaperonin GroES.

It localises to the cytoplasm. The catalysed reaction is ATP + H2O + a folded polypeptide = ADP + phosphate + an unfolded polypeptide.. Functionally, together with its co-chaperonin GroES, plays an essential role in assisting protein folding. The GroEL-GroES system forms a nano-cage that allows encapsulation of the non-native substrate proteins and provides a physical environment optimized to promote and accelerate protein folding. This Azoarcus sp. (strain BH72) protein is Chaperonin GroEL 2.